Reading from the N-terminus, the 469-residue chain is Arginine biosynthesis bifunctional protein ArgJ, chloroplastic (469 aa).

Substrate is bound by residues Thr-213, Lys-239, Thr-250, Glu-337, Asn-464, and Thr-469. Thr-250 acts as the Nucleophile in catalysis.

Belongs to the ArgJ family. Heterodimer of an alpha and a beta chain.

The protein resides in the plastid. Its subcellular location is the chloroplast. The enzyme catalyses N(2)-acetyl-L-ornithine + L-glutamate = N-acetyl-L-glutamate + L-ornithine. The catalysed reaction is L-glutamate + acetyl-CoA = N-acetyl-L-glutamate + CoA + H(+). It participates in amino-acid biosynthesis; L-arginine biosynthesis; L-ornithine and N-acetyl-L-glutamate from L-glutamate and N(2)-acetyl-L-ornithine (cyclic): step 1/1. It functions in the pathway amino-acid biosynthesis; L-arginine biosynthesis; N(2)-acetyl-L-ornithine from L-glutamate: step 1/4. In terms of biological role, catalyzes two activities which are involved in the cyclic version of arginine biosynthesis: the synthesis of acetylglutamate from glutamate and acetyl-CoA, and of ornithine by transacetylation between acetylornithine and glutamate. The chain is Arginine biosynthesis bifunctional protein ArgJ, chloroplastic from Ricinus communis (Castor bean).